Here is a 410-residue protein sequence, read N- to C-terminus: WD repeat and FYVE domain-containing protein 1 (410 aa).

WD repeat units follow at residues 22 to 61 (GHQD…QYWP), 66 to 105 (TMAS…NKMN), 112 to 150 (AHQN…NMLG), 153 to 192 (FFSS…CSVI), 197 to 236 (GHEG…GRTL), and 240 to 279 (GHHD…EEAP). The FYVE-type zinc finger occupies 281–352 (WLESDSCQKC…VCDSCYDSIK (72 aa)). Positions 287, 290, 314, 317, 322, 325, 344, and 347 each coordinate Zn(2+). One copy of the WD 7 repeat lies at 364–403 (EGKHNISHMSMDVARGLMVTCGTDRVVKIWDMTPVVGCSL). Position 408 is a phosphoserine (S408).

As to quaternary structure, binds PtdIns3P in vitro with high specificity over other phosphoinositides. Interacts (via WD repeat 2) with tyrosine-phosphorylated TLR3 (via TIR domain) in response to poly(I:C). Interacts with TLR4 in response to LPS. Interacts with TICAM1 in response to poly(I:C).

It localises to the early endosome. Its function is as follows. Positively regulates TLR3- and TLR4-mediated signaling pathways by bridging the interaction between TLR3 or TLR4 and TICAM1. Promotes TLR3/4 ligand-induced activation of transcription factors IRF3 and NF-kappa-B, as well as the production of IFN-beta and inflammatory cytokines. This Bos taurus (Bovine) protein is WD repeat and FYVE domain-containing protein 1 (WDFY1).